The chain runs to 1364 residues: Pleckstrin homology domain-containing family H member 1 (1364 aa).

A coiled-coil region spans residues 28 to 169; that stretch reads FRLQASKIRE…VGSLQDALEA (142 aa). Disordered stretches follow at residues 184-266, 296-321, 356-395, 487-529, and 546-568; these read GAAE…SPPH, GTKT…PGTP, LHPS…ESPK, PFMD…IKRG, and DACS…SSYS. Residues 237-246 show a composition bias toward polar residues; that stretch reads EDSSSSTVHS. The span at 364 to 379 shows a compositional bias: basic and acidic residues; the sequence is LESRARSREEPEKMEM. Over residues 509–520 the composition is skewed to polar residues; the sequence is VPSSESRKTSGL. PH domains follow at residues 578-672 and 687-796; these read SLEK…SLLK and KPTV…VAAG. Residue S745 is modified to Phosphoserine. Residues 832–986 enclose the MyTH4 domain; it reads YSKDGLYASL…PSRMEVVSIL (155 aa). The 337-residue stretch at 997-1333 folds into the FERM domain; sequence FSIPVHFTNG…NHCTTTVNPP (337 aa).

The sequence is that of Pleckstrin homology domain-containing family H member 1 (PLEKHH1) from Homo sapiens (Human).